Consider the following 198-residue polypeptide: Segregation and condensation protein B (198 aa).

Residues 169–198 (LADPAAEEPDQNEMDLFFDRFNQSKEQEEE) are disordered.

It belongs to the ScpB family. Homodimer. Homodimerization may be required to stabilize the binding of ScpA to the Smc head domains. Component of a cohesin-like complex composed of ScpA, ScpB and the Smc homodimer, in which ScpA and ScpB bind to the head domain of Smc. The presence of the three proteins is required for the association of the complex with DNA.

The protein localises to the cytoplasm. Participates in chromosomal partition during cell division. May act via the formation of a condensin-like complex containing Smc and ScpA that pull DNA away from mid-cell into both cell halves. This is Segregation and condensation protein B from Listeria monocytogenes serotype 4a (strain HCC23).